The following is a 148-amino-acid chain: Cystatin-D (148 aa).

An N-terminal signal peptide occupies residues 1–33; it reads MASLLSPSMPVLAAVALTLTLAVIPEASTNAEA. A Cystatin kininogen-type domain is found at 36 to 148; it reads VVLGGVEPAD…SMTNFNCYNF (113 aa). Intrachain disulfides connect cysteine 101–cysteine 111 and cysteine 125–cysteine 145.

This sequence belongs to the cystatin family. In cartilage, expressed mainly in mature chondrocytes including prehypertrophic and hypertrophic cells (at protein level). Expressed exclusively in cartilage.

Its subcellular location is the cytoplasm. The protein localises to the cytosol. May play a role in the last steps of the chondrocyte differentiation pathway as an inducer of maturation. Induces chondrocyte calcification during endochondral ossification by playing a role in the transcriptional inhibition of ENPP1, a generator of pyrophosphate which inhibits calcification. Possibly impairs the binding of a transcription factor to the ENPP1 promoter. Unlike other cystatins, does not have thiol protease inhibitor activity. The protein is Cystatin-D of Mus musculus (Mouse).